A 155-amino-acid polypeptide reads, in one-letter code: Ribosomal RNA large subunit methyltransferase H (155 aa).

S-adenosyl-L-methionine-binding positions include I71, G103, and 122–127 (FGRMVW).

The protein belongs to the RNA methyltransferase RlmH family. In terms of assembly, homodimer.

It is found in the cytoplasm. It catalyses the reaction pseudouridine(1915) in 23S rRNA + S-adenosyl-L-methionine = N(3)-methylpseudouridine(1915) in 23S rRNA + S-adenosyl-L-homocysteine + H(+). Its function is as follows. Specifically methylates the pseudouridine at position 1915 (m3Psi1915) in 23S rRNA. The sequence is that of Ribosomal RNA large subunit methyltransferase H from Cereibacter sphaeroides (strain ATCC 17025 / ATH 2.4.3) (Rhodobacter sphaeroides).